A 612-amino-acid polypeptide reads, in one-letter code: MGVEVVNSGGFEVAPAPFEGKPEKNGKLDQGKGDDAPINFGSVGELPKNAEENNNKVVNSDAPKNAAEEWPVAKQIHSFYLVKYRSYADPKIKAKLDLADKELEKLNKARTGVLDKLRAKRAERSELFDLLDPLKSERKGFNTMFDEKRKEMEPLQQALGKLRSNDGGSARGPAICSSEEELNSMIYSYQYRIQHESIPLTEEKQILKEIRLLEGTRDKVIANAAMRAKIKESMGQKDDIQGQVKLMGAGLDGVKKERQAISARINELSEKLKATKDEITVLENELKTVSEKRDKAYSNIHDLRRQRDETNSEYYQNRTVLNKARDLAAQKNISELEALANAEVEKFISLWCSKKNFREDYEKRILQSLDSRQLSRDGRMRNPDEKPLIAPEAAPSKATPSETEVVPKAKAKPQPKEEPVSAPKPDATVAQNTEKAKDAVKVKNVADDDDDEVYGLGKPQKEEKPVDAATAKEMRKQEEIAKAKQAMERKKKLAEKAAAKAAIRAQKEAEKKEKKEQEKKAKKKTGGNTETETEEVPEASEEEIEAPVQEEKPQKEKVFKEKPIRNRTRGRGPETIPRAILKRKKSTNYWVYAAPAALVVLLLLVLGYYYVL.

Residues 1-58 (MGVEVVNSGGFEVAPAPFEGKPEKNGKLDQGKGDDAPINFGSVGELPKNAEENNNKVV) are disordered. Positions 20–35 (GKPEKNGKLDQGKGDD) are enriched in basic and acidic residues. Coiled-coil stretches lie at residues 90–113 (PKIK…RTGV) and 251–314 (LDGV…NSEY). Composition is skewed to basic and acidic residues over residues 374–387 (LSRD…DEKP), 434–446 (EKAK…KNVA), 459–498 (PQKE…EKAA), and 505–519 (AQKE…EQEK). The disordered stretch occupies residues 374-572 (LSRDGRMRNP…PIRNRTRGRG (199 aa)). Residues 466–526 (VDAATAKEMR…QEKKAKKKTG (61 aa)) are a coiled coil. Residues 531 to 545 (TETEEVPEASEEEIE) show a composition bias toward acidic residues. Phosphoserine is present on S540. Over residues 549-564 (QEEKPQKEKVFKEKPI) the composition is skewed to basic and acidic residues. A helical membrane pass occupies residues 591 to 611 (VYAAPAALVVLLLLVLGYYYV).

The protein belongs to the plant Proton pump-interactor protein family. Interacts with AHA1 via N-terminal region. Strongly expressed in root and shoot vascular systems, particularly in meristematic and sink tissues. Also present in pollen, stigmas and siliques, but not in developing embryos.

It is found in the cell membrane. Its subcellular location is the endoplasmic reticulum membrane. In terms of biological role, promotes AHA1 plasma membrane ATPase activity by binding to a site different from the 14-3-3 binding site. The polypeptide is Proton pump-interactor 1 (PPI1) (Arabidopsis thaliana (Mouse-ear cress)).